Here is a 90-residue protein sequence, read N- to C-terminus: Barrier-to-autointegration factor-like protein (90 aa).

As to quaternary structure, homodimer. Heterodimerizes with BANF1.

The protein localises to the nucleus. It localises to the cytoplasm. Functionally, may play a role in BANF1 regulation and influence tissue-specific roles of BANF1. This chain is Barrier-to-autointegration factor-like protein (Banf2), found in Mus musculus (Mouse).